The following is a 130-amino-acid chain: MVMTDPIADMLTRIRNANQMSHLKVLVPASKLKLEILAVLKKEGFIKDFYLPQSSREIIISLKYSPNKERVIKGLKRVSKPGLRVYASAEQIPKVLNGLGVALVSTSKGILTDAQARLSQVGGEVLAYIW.

The protein belongs to the universal ribosomal protein uS8 family. Part of the 30S ribosomal subunit. Contacts proteins S5 and S12.

One of the primary rRNA binding proteins, it binds directly to 16S rRNA central domain where it helps coordinate assembly of the platform of the 30S subunit. In Aster yellows witches'-broom phytoplasma (strain AYWB), this protein is Small ribosomal subunit protein uS8.